The following is a 987-amino-acid chain: Rho GTPase-activating protein 6 (987 aa).

Residues 1–21 (MSAQSLLHSVFSCSSPASGGT) show a composition bias toward polar residues. Disordered stretches follow at residues 1 to 60 (MSAQ…RGST), 76 to 117 (SRLA…SGSF), and 144 to 170 (GSGSASSRSPASILSSSGGGPNGIFSS). A Phosphoserine modification is found at Ser37. Residues 44–57 (GGCGSEMGAEGGLR) are compositionally biased toward gly residues. Over residues 100–115 (SSFSTPSTPQEKSPSG) the composition is skewed to polar residues. Over residues 144 to 159 (GSGSASSRSPASILSS) the composition is skewed to low complexity. The residue at position 265 (Ser265) is a Phosphoserine. A disordered region spans residues 324–363 (KQNKELSSSNSSLSSTSETPNESTSPNTPEPAPRARRRGA). Over residues 328-350 (ELSSSNSSLSSTSETPNESTSPN) the composition is skewed to low complexity. The short motif at 344 to 354 (NESTSPNTPEP) is the SH3-binding element. Ser365 is subject to Phosphoserine. In terms of domain architecture, Rho-GAP spans 403 to 604 (LSLNPIYRQV…KMIENYEALF (202 aa)). Positions 641-676 (DILQTEVSFSMGGRHSSTDSNKASSGDISPYDNNSP) are disordered. Residues 658 to 676 (TDSNKASSGDISPYDNNSP) show a composition bias toward polar residues. A phosphoserine mark is found at Ser669, Ser675, Ser682, Ser713, Ser758, Ser776, Ser781, Ser790, and Ser824. Residues 709–731 (GHLSSPKSKSRESSPGPRLGKEM) are disordered. 2 disordered regions span residues 825–847 (TPHIQDGSRGTRRPAASSDPFLS) and 863–953 (WLQS…QDKQ). Positions 939 to 948 (LSSAYSLSAS) are enriched in low complexity. Phosphoserine occurs at positions 941 and 944.

As to expression, expressed in retina and lung.

It localises to the cytoplasm. In terms of biological role, GTPase activator for the Rho-type GTPases by converting them to an inactive GDP-bound state. Could regulate the interactions of signaling molecules with the actin cytoskeleton. Promotes continuous elongation of cytoplasmic processes during cell motility and simultaneous retraction of the cell body changing the cell morphology. The sequence is that of Rho GTPase-activating protein 6 (Arhgap6) from Mus musculus (Mouse).